Consider the following 621-residue polypeptide: Cyclic nucleotide-gated ion channel 11 (621 aa).

The Cytoplasmic portion of the chain corresponds to 1 to 43 (MNLQRRKFVRLDSTGVDGKLKSVRGRLKKVYGKMKTLENWRKT). A helical membrane pass occupies residues 44–64 (VLLACVVALAIDPLFLFIPLI). Over 65–76 (DSQRFCFTFDKT) the chain is Extracellular. The helical transmembrane segment at 77 to 97 (LVAVVCVIRTFIDTFYVIHII) threads the bilayer. Over 98–128 (YYLITETIAPRSQASLRGEIVVHSKATLKTR) the chain is Cytoplasmic. The chain crosses the membrane as a helical span at residues 129-149 (LLFHFIVDIISVLPIPQVVVL). Topologically, residues 150-162 (TLIPLSASLVSER) are extracellular. A helical transmembrane segment spans residues 163–183 (ILKWIILSQYVPRIIRMYPLY). Residues 184–198 (KEVTRAFGTVAESKR) are Cytoplasmic-facing. A helical membrane pass occupies residues 199–219 (VGAALNFFLYMLHSYVCGAFW). The Extracellular segment spans residues 220–329 (YLSSIERKST…QNLETSNSAG (110 aa)). Residues 330–350 (EIFFAIIICVSGLLLFAVLIG) form a helical membrane-spanning segment. Topologically, residues 351 to 621 (NVQKYLQSST…KLNLGAAIYA (271 aa)) are cytoplasmic. A nucleoside 3',5'-cyclic phosphate is bound by residues 435–556 (LLQA…HSKQ) and D506. The calmodulin-binding stretch occupies residues 549 to 564 (YRRLHSKQLQHMFRFY). Positions 569-598 (QTWAACFIQAAWKRHCRRKLSKALREEEGK) constitute an IQ domain.

The protein belongs to the cyclic nucleotide-gated cation channel (TC 1.A.1.5) family. As to quaternary structure, homotetramer or heterotetramer.

The protein localises to the cell membrane. Functionally, putative cyclic nucleotide-gated ion channel. The polypeptide is Cyclic nucleotide-gated ion channel 11 (CNGC11) (Arabidopsis thaliana (Mouse-ear cress)).